The sequence spans 403 residues: Cystinosin homolog (403 aa).

The Lumenal portion of the chain corresponds to 1–122 (MKLPVSILFF…YSRITVIRSH (122 aa)). 4 N-linked (GlcNAc...) asparagine glycosylation sites follow: N45, N52, N78, and N96. Residues 123 to 143 (WLAILIQIVGWTYFAAWSVSF) traverse the membrane as a helical segment. The region spanning 124-190 (LAILIQIVGW…MYYNSHVKNI (67 aa)) is the PQ-loop 1 domain. Residues 144-162 (YPQMYLNFKRKSVVGLNFD) are Cytoplasmic-facing. Residues 163 to 183 (FLSLNLVGFGAYAMFNLLMYY) traverse the membrane as a helical segment. Topologically, residues 184-206 (NSHVKNIYSMENPRSPPPVLLND) are lumenal. Residues 207–227 (VVFAVHAFLACFVTILQCIFY) traverse the membrane as a helical segment. Topologically, residues 228 to 237 (ERDQQRISTK) are cytoplasmic. The chain crosses the membrane as a helical span at residues 238 to 258 (CIILIIGLVSFGFVSVVVTVL). Over 259-260 (NK) the chain is Lumenal. A helical transmembrane segment spans residues 261-283 (ITILDFVVSLSYIKMAVTCCKYF). A PQ-loop 2 domain is found at 266–326 (FVVSLSYIKM…MVLQAINVND (61 aa)). Over 284-294 (PQAYFNYQRKS) the chain is Cytoplasmic. The chain crosses the membrane as a helical span at residues 295 to 315 (TVGWSIGNILLDFTGGSLDIL). At 316–336 (QMVLQAINVNDWSAFYANPVK) the chain is on the lumenal side. A helical transmembrane segment spans residues 337–357 (FGLGFVSIFFDIIFMIQHYAL). The Cytoplasmic portion of the chain corresponds to 358-403 (YPDAEVPHNEYHGVDNPDPDSIVRDAEHGAADNESMESTDPIIVHD). The segment covering 374-388 (PDPDSIVRDAEHGAA) has biased composition (basic and acidic residues). The tract at residues 374–403 (PDPDSIVRDAEHGAADNESMESTDPIIVHD) is disordered.

This sequence belongs to the cystinosin family.

It is found in the lysosome membrane. The protein localises to the cytoplasmic vesicle. Its subcellular location is the phagosome. The catalysed reaction is L-cystine(out) + H(+)(out) = L-cystine(in) + H(+)(in). Its function is as follows. Cystine/H(+) symporter that mediates export of cystine, the oxidized dimer of cysteine, from lysosomes. May play a role in the degradation of engulfed apoptotic cells. The sequence is that of Cystinosin homolog (ctns-1) from Caenorhabditis briggsae.